The following is a 216-amino-acid chain: ATP phosphoribosyltransferase (216 aa).

Belongs to the ATP phosphoribosyltransferase family. Short subfamily. Heteromultimer composed of HisG and HisZ subunits.

It localises to the cytoplasm. It carries out the reaction 1-(5-phospho-beta-D-ribosyl)-ATP + diphosphate = 5-phospho-alpha-D-ribose 1-diphosphate + ATP. It participates in amino-acid biosynthesis; L-histidine biosynthesis; L-histidine from 5-phospho-alpha-D-ribose 1-diphosphate: step 1/9. Catalyzes the condensation of ATP and 5-phosphoribose 1-diphosphate to form N'-(5'-phosphoribosyl)-ATP (PR-ATP). Has a crucial role in the pathway because the rate of histidine biosynthesis seems to be controlled primarily by regulation of HisG enzymatic activity. The sequence is that of ATP phosphoribosyltransferase from Prochlorococcus marinus (strain MIT 9211).